An 836-amino-acid polypeptide reads, in one-letter code: MDSTKEEEDLNNNIDEISDGENEEEELDEAIAAALQKIEVPSIPRRVKVYEMEDENWVDCGTGYCDGKIEGPLAYFIVRSEADNETILLKTQLIAEDIYSRQEETLIVWQELNGTDLALSFQESSGCIDMWMFLANVQKAISSVTRSYSNDDILTDEGALNENYLNTVDLPAPELANLKEIEEAVYGYMQSIQSRDSLVRYVSNENYIDRLIELFPLCEDLENTDDLHRLCSIIKSFVQLNDAPLLESLFSNDEKLMCVAGILEYDPEFPNIKANHREYLMDSKKFKQVVPIQDPRILAKIHQTFKLQYLRDVVVSRIVDEPSFSVLNSFIFFNQADIIQYLQTNEKFLHELFSIYVNEGEDDQRKQDGIFFIQQVCNIAKGLQFQSCSALFATFVKFNLLKALDYAMSHENNSVRNAGSDILVSIIDHEPAIVWQKFDQDRKDASSSLSNAHVSQHSLLSNLINILHKESNPGVLAQISEAFKMLLSLPGSYAYNNPYRNADGNVRNKTDNIIGINFIENFYDNSFNMLAAPLLELENVSSLDVKKLDMYMHLCELFCYFFRIHDYWSRRFDTYKTLTSKVALLLYSDRKYVVLSALRFIRSCLAARQSEMSLIMLETDTYGKVLDLMLKVKDQTNLVNSAALEFFEFLRSEGSEDTLDYLNKNYRPQLESLNNLSTFSELLNIIDGLSSDSRSPKTVGTHESNSYEFDGASNNNQRVGDDVSKDWEIQQDFSIENDTELSEKVGQRTVLDSIAPAELNIEDSCEQPKQPILEDRYFLESAVYDTSAESSGINVSNTRYSKRKSDFQVDDQQADDESPKKRLSIDSSSAQNGYAS.

Disordered regions lie at residues 1–25 (MDST…NEEE), 692–718 (DSRS…NNQR), and 789–836 (ESSG…GYAS). 2 stretches are compositionally biased toward polar residues: residues 789-799 (ESSGINVSNTR) and 825-836 (IDSSSAQNGYAS).

The protein localises to the nucleus. This is an uncharacterized protein from Schizosaccharomyces pombe (strain 972 / ATCC 24843) (Fission yeast).